The chain runs to 888 residues: Alanine--tRNA ligase (888 aa).

The Zn(2+) site is built by histidine 571, histidine 575, cysteine 674, and histidine 678.

The protein belongs to the class-II aminoacyl-tRNA synthetase family. Zn(2+) is required as a cofactor.

It localises to the cytoplasm. The catalysed reaction is tRNA(Ala) + L-alanine + ATP = L-alanyl-tRNA(Ala) + AMP + diphosphate. Catalyzes the attachment of alanine to tRNA(Ala) in a two-step reaction: alanine is first activated by ATP to form Ala-AMP and then transferred to the acceptor end of tRNA(Ala). Also edits incorrectly charged Ser-tRNA(Ala) and Gly-tRNA(Ala) via its editing domain. This Nocardia farcinica (strain IFM 10152) protein is Alanine--tRNA ligase.